A 141-amino-acid polypeptide reads, in one-letter code: Hemoglobin subunit alpha (141 aa).

In terms of domain architecture, Globin spans 1 to 141; sequence VLSGEDKNNI…VSTVLTSKYR (141 aa). At serine 3 the chain carries Phosphoserine. Lysine 7 and lysine 11 each carry N6-succinyllysine. At lysine 16 the chain carries N6-acetyllysine; alternate. N6-succinyllysine; alternate is present on lysine 16. Tyrosine 24 carries the phosphotyrosine modification. Lysine 40 is modified (N6-succinyllysine). Serine 49 carries the phosphoserine modification. Histidine 58 lines the O2 pocket. Histidine 87 provides a ligand contact to heme b. At serine 102 the chain carries Phosphoserine. Residue threonine 108 is modified to Phosphothreonine. Phosphoserine is present on residues serine 124 and serine 131. Phosphothreonine occurs at positions 134 and 137. Serine 138 is subject to Phosphoserine.

This sequence belongs to the globin family. As to quaternary structure, heterotetramer of two alpha chains and two beta chains. As to expression, red blood cells.

In terms of biological role, involved in oxygen transport from the lung to the various peripheral tissues. Functionally, hemopressin acts as an antagonist peptide of the cannabinoid receptor CNR1. Hemopressin-binding efficiently blocks cannabinoid receptor CNR1 and subsequent signaling. This Ondatra zibethicus (Muskrat) protein is Hemoglobin subunit alpha (HBA).